Reading from the N-terminus, the 220-residue chain is MSRSGKDPGKRVKTARKRSASSTRWLERQLNDPYVKQAKADGYRSRAAYKLIELDGKFGILKGASRVVDLGIAPGGWAQVVRKVRPKAGIVGIDLLETEPIEGVTILQMDFMADEAPAGLEAALDGPPDLVMSDMAANTVGHKQTDHLRTMGLVEAAAWFAIETLEEGGTFLAKVLAGGTDNDLLKLLKSHFKTVKHAKPPASRKGSSEWYVVAQGFKGR.

Basic and acidic residues predominate over residues 1–10 (MSRSGKDPGK). The tract at residues 1–24 (MSRSGKDPGKRVKTARKRSASSTR) is disordered. S-adenosyl-L-methionine contacts are provided by Gly-75, Trp-77, Asp-94, Asp-110, and Asp-134. The active-site Proton acceptor is the Lys-174.

This sequence belongs to the class I-like SAM-binding methyltransferase superfamily. RNA methyltransferase RlmE family.

The protein resides in the cytoplasm. It carries out the reaction uridine(2552) in 23S rRNA + S-adenosyl-L-methionine = 2'-O-methyluridine(2552) in 23S rRNA + S-adenosyl-L-homocysteine + H(+). Functionally, specifically methylates the uridine in position 2552 of 23S rRNA at the 2'-O position of the ribose in the fully assembled 50S ribosomal subunit. The sequence is that of Ribosomal RNA large subunit methyltransferase E from Erythrobacter litoralis (strain HTCC2594).